We begin with the raw amino-acid sequence, 249 residues long: 5'-nucleotidase SurE (249 aa).

The a divalent metal cation site is built by Asp-8, Asp-9, Ser-39, and Asn-96.

It belongs to the SurE nucleotidase family. Requires a divalent metal cation as cofactor.

Its subcellular location is the cytoplasm. It carries out the reaction a ribonucleoside 5'-phosphate + H2O = a ribonucleoside + phosphate. Nucleotidase that shows phosphatase activity on nucleoside 5'-monophosphates. This Clostridium tetani (strain Massachusetts / E88) protein is 5'-nucleotidase SurE.